Consider the following 359-residue polypeptide: 3-dehydroquinate synthase (359 aa).

Residues 71–76 (DGEQYK), 105–109 (GVIGD), 129–130 (TT), K142, K151, and 169–172 (CLAT) contribute to the NAD(+) site. The Zn(2+) site is built by E184, H247, and H264.

Belongs to the sugar phosphate cyclases superfamily. Dehydroquinate synthase family. Requires Co(2+) as cofactor. The cofactor is Zn(2+). NAD(+) serves as cofactor.

It localises to the cytoplasm. The enzyme catalyses 7-phospho-2-dehydro-3-deoxy-D-arabino-heptonate = 3-dehydroquinate + phosphate. It participates in metabolic intermediate biosynthesis; chorismate biosynthesis; chorismate from D-erythrose 4-phosphate and phosphoenolpyruvate: step 2/7. Functionally, catalyzes the conversion of 3-deoxy-D-arabino-heptulosonate 7-phosphate (DAHP) to dehydroquinate (DHQ). This Baumannia cicadellinicola subsp. Homalodisca coagulata protein is 3-dehydroquinate synthase.